Reading from the N-terminus, the 616-residue chain is Dihydroxy-acid dehydratase (616 aa).

Aspartate 81 contacts Mg(2+). Cysteine 122 is a binding site for [2Fe-2S] cluster. Positions 123 and 124 each coordinate Mg(2+). N6-carboxylysine is present on lysine 124. [2Fe-2S] cluster is bound at residue cysteine 195. Glutamate 491 provides a ligand contact to Mg(2+). Catalysis depends on serine 517, which acts as the Proton acceptor.

Belongs to the IlvD/Edd family. In terms of assembly, homodimer. The cofactor is [2Fe-2S] cluster. Requires Mg(2+) as cofactor.

The catalysed reaction is (2R)-2,3-dihydroxy-3-methylbutanoate = 3-methyl-2-oxobutanoate + H2O. It catalyses the reaction (2R,3R)-2,3-dihydroxy-3-methylpentanoate = (S)-3-methyl-2-oxopentanoate + H2O. Its pathway is amino-acid biosynthesis; L-isoleucine biosynthesis; L-isoleucine from 2-oxobutanoate: step 3/4. It functions in the pathway amino-acid biosynthesis; L-valine biosynthesis; L-valine from pyruvate: step 3/4. In terms of biological role, functions in the biosynthesis of branched-chain amino acids. Catalyzes the dehydration of (2R,3R)-2,3-dihydroxy-3-methylpentanoate (2,3-dihydroxy-3-methylvalerate) into 2-oxo-3-methylpentanoate (2-oxo-3-methylvalerate) and of (2R)-2,3-dihydroxy-3-methylbutanoate (2,3-dihydroxyisovalerate) into 2-oxo-3-methylbutanoate (2-oxoisovalerate), the penultimate precursor to L-isoleucine and L-valine, respectively. This Escherichia coli O8 (strain IAI1) protein is Dihydroxy-acid dehydratase.